Reading from the N-terminus, the 428-residue chain is L-lysine N6-monooxygenase MbtG (428 aa).

Positions 1–20 (MSTLAILGAGAKAVAVAAKA) are cleaved as a signal peptide.

The protein belongs to the lysine N(6)-hydroxylase/L-ornithine N(5)-oxygenase family. The cofactor is FAD.

The enzyme catalyses L-lysine + NADPH + O2 = N(6)-hydroxy-L-lysine + NADP(+) + H2O. Its pathway is siderophore biosynthesis; mycobactin biosynthesis. In terms of biological role, flavoprotein monooxygenase required for N-hydroxylation of the two acylated lysine residues during mycobactin assembly, thus producing the hydroxamate groups necessary for iron sequestration. Is also able, but less efficiently, to hydroxylate L-lysine (non acylated) in vitro. This Mycolicibacterium paratuberculosis (strain ATCC BAA-968 / K-10) (Mycobacterium paratuberculosis) protein is L-lysine N6-monooxygenase MbtG (mbtG).